Reading from the N-terminus, the 267-residue chain is MRFSIQPTILFFDSGVGGLSVYKETKQLLPDCHYLYCFDNGFFPYSEKDEKDIIDRTLRICQKINQAYPLDLIVIACNTASTVVLPELRRNFSIPIVGTVPAIKPAAEMSETKHIGLIATKGTIKRTYVNDLIKNYAHHCMVEKIGSTKLVEIAEQKLRGGEVDLNVLKQELSPWQTMKSLDSVVLGCTHFPLIKEEIECCLPQVKFFVSSGKAIAKRVKFLLKGIEVRSKIQKKNLIFCTKPLEDDKSVQQILDFGEFENLVILSE.

Substrate is bound by residues 13-14 (DS) and 45-46 (YS). Cys-77 (proton donor/acceptor) is an active-site residue. 78–79 (NT) provides a ligand contact to substrate. Cys-188 acts as the Proton donor/acceptor in catalysis. 189–190 (TH) lines the substrate pocket.

The protein belongs to the aspartate/glutamate racemases family.

The enzyme catalyses L-glutamate = D-glutamate. Its pathway is cell wall biogenesis; peptidoglycan biosynthesis. Its function is as follows. Provides the (R)-glutamate required for cell wall biosynthesis. This Histophilus somni (strain 129Pt) (Haemophilus somnus) protein is Glutamate racemase.